Reading from the N-terminus, the 538-residue chain is Protein PNS1 (538 aa).

Over residues 1–54 (MGESDAYYNGGQQQQYNGGYQQQYQPQPPAASYQAPPQQPYQQQPYQQGPPQNG) the composition is skewed to low complexity. Residues 1 to 67 (MGESDAYYNG…GNGYMPAQGY (67 aa)) are disordered. The Cytoplasmic segment spans residues 1-88 (MGESDAYYNG…FKIAKPKYND (88 aa)). A helical membrane pass occupies residues 89-109 (LWAGILLILVFAGFVVVSGLA). Residues 110-137 (LQGYSANKGNAGDGIYNNKNDFSPNTST) lie on the Extracellular side of the membrane. Residue N134 is glycosylated (N-linked (GlcNAc...) asparagine). A helical membrane pass occupies residues 138–158 (VILFMFVLAVAFVLSYAYVWM). At 159 to 165 (ARLFPKQ) the chain is on the cytoplasmic side. Residues 166–186 (FIWVTGILNVCWAIGTAIFYL) traverse the membrane as a helical segment. Over 187–191 (WRKYW) the chain is Extracellular. The chain crosses the membrane as a helical span at residues 192–212 (SAGIVFLIFGLFMAFCFWTWI). The Cytoplasmic portion of the chain corresponds to 213 to 239 (SRIPFSALMLKTTIDVSKKYGHVYLVS). Residues 240 to 260 (LIGGIIATAFSAWYAITLVGI) form a helical membrane-spanning segment. Over 261 to 280 (YVKYQPAQDNPSCADGGCGK) the chain is Extracellular. Residues 281–301 (GKVIGLIAFITFAMYWFSEWL) form a helical membrane-spanning segment. Over 302 to 335 (KNTIHTTIAGVYGSWYFNPHNFPKDATRASAKRA) the chain is Cytoplasmic. The chain crosses the membrane as a helical span at residues 336–356 (LTYSFGSIALGSLLVAIIQFL). Residues 357-372 (RQICNAARNQEGADGS) are Extracellular-facing. The chain crosses the membrane as a helical span at residues 373 to 393 (FVGYAIFCCISCLLGLLEWAV). The Cytoplasmic portion of the chain corresponds to 394 to 434 (EFINRYAFCHIALYGKAYFAAAKDTWKMIKDRGIDALINDC). A helical transmembrane segment spans residues 435-455 (LIGPVLSFGALFIAYACALLA). Topologically, residues 456 to 474 (YLYLYFTDPAYNSDGQYTA) are extracellular. The helical transmembrane segment at 475–495 (VVMAFSFLIGFQIANVFTTPI) threads the bilayer. Topologically, residues 496–538 (SSGIETIFVAAGWDPQVMWRDHPELYNEMVRVYPKVQQVIKDR) are cytoplasmic.

The protein belongs to the CTL (choline transporter-like) family.

It is found in the cell membrane. Functionally, probably involved in transport through the plasma membrane. The polypeptide is Protein PNS1 (PNS1) (Gibberella zeae (strain ATCC MYA-4620 / CBS 123657 / FGSC 9075 / NRRL 31084 / PH-1) (Wheat head blight fungus)).